Consider the following 505-residue polypeptide: Probable Xaa-Pro aminopeptidase Pc16g13390 (505 aa).

4 residues coordinate Mn(2+): D287, D298, E436, and E475.

Belongs to the peptidase M24B family. Mn(2+) is required as a cofactor.

The enzyme catalyses Release of any N-terminal amino acid, including proline, that is linked to proline, even from a dipeptide or tripeptide.. Its function is as follows. Catalyzes the removal of a penultimate prolyl residue from the N-termini of peptides. The protein is Probable Xaa-Pro aminopeptidase Pc16g13390 of Penicillium rubens (strain ATCC 28089 / DSM 1075 / NRRL 1951 / Wisconsin 54-1255) (Penicillium chrysogenum).